A 477-amino-acid chain; its full sequence is Trigger factor (477 aa).

The region spanning Gly-174–Pro-261 is the PPIase FKBP-type domain. Residues Val-435–Lys-477 form a disordered region. Positions Thr-442–Thr-470 are enriched in low complexity.

Belongs to the FKBP-type PPIase family. Tig subfamily.

The protein localises to the cytoplasm. The enzyme catalyses [protein]-peptidylproline (omega=180) = [protein]-peptidylproline (omega=0). In terms of biological role, involved in protein export. Acts as a chaperone by maintaining the newly synthesized protein in an open conformation. Functions as a peptidyl-prolyl cis-trans isomerase. The polypeptide is Trigger factor (Prochlorococcus marinus (strain MIT 9301)).